A 390-amino-acid polypeptide reads, in one-letter code: Cell adhesion molecule 4 (390 aa).

An N-terminal signal peptide occupies residues 1-27; sequence MAPALTALNRCFVLGILLLVTAGTAFS. The Ig-like V-type domain maps to 28–122; that stretch reads QEVQAENVTV…DTHHQIATLT (95 aa). Residues 28–326 are Extracellular-facing; sequence QEVQAENVTV…IEAQTQVPYA (299 aa). Asn-34 and Asn-70 each carry an N-linked (GlcNAc...) asparagine glycan. Intrachain disulfides connect Cys-47–Cys-107, Cys-148–Cys-202, and Cys-247–Cys-293. Ig-like C2-type domains lie at 127–219 and 226–309; these read PDNP…TQYE and PTAS…YVLV. N-linked (GlcNAc...) asparagine glycosylation is found at Asn-264 and Asn-288. The chain crosses the membrane as a helical span at residues 327 to 347; it reads VIGGILALLVFLVICILIVMV. Topologically, residues 348 to 390 are cytoplasmic; sequence WCSVRQKGSYLTHEASGLDEHGEAREAFLNGGENHKRKEEFFI.

Belongs to the nectin family.

It is found in the membrane. Functionally, involved in the cell-cell adhesion. This Xenopus laevis (African clawed frog) protein is Cell adhesion molecule 4 (cadm4).